Consider the following 210-residue polypeptide: Uridine kinase (210 aa).

12-19 (GGSGGGKT) is a binding site for ATP.

The protein belongs to the uridine kinase family.

It localises to the cytoplasm. The catalysed reaction is uridine + ATP = UMP + ADP + H(+). It carries out the reaction cytidine + ATP = CMP + ADP + H(+). Its pathway is pyrimidine metabolism; CTP biosynthesis via salvage pathway; CTP from cytidine: step 1/3. It functions in the pathway pyrimidine metabolism; UMP biosynthesis via salvage pathway; UMP from uridine: step 1/1. In Streptococcus uberis (strain ATCC BAA-854 / 0140J), this protein is Uridine kinase.